A 103-amino-acid chain; its full sequence is U-scoloptoxin(24)-Er1a (103 aa).

Residues methionine 1–glycine 23 form the signal peptide.

It belongs to the scoloptoxin-24 family. In terms of processing, contains 1 disulfide bond. As to expression, expressed by the venom gland.

It localises to the secreted. The sequence is that of U-scoloptoxin(24)-Er1a from Ethmostigmus rubripes (Giant centipede).